The following is a 524-amino-acid chain: N-acetylgalactosamine-6-sulfatase (524 aa).

Positions 1–27 (MTACSTAIRAQQLLLPVLSALGLLAAG) are cleaved as a signal peptide. Residues 28–381 (APQPPNIVLL…PTMLQGHIID (354 aa)) are catalytic domain. Aspartate 40, aspartate 41, and cysteine 80 together coordinate Ca(2+). Cysteine 80 serves as the catalytic Nucleophile. Cysteine 80 carries the 3-oxoalanine (Cys) modification. Histidine 143 is an active-site residue. An N-linked (GlcNAc...) asparagine glycan is attached at asparagine 205. Aspartate 290 and asparagine 291 together coordinate Ca(2+). Residues cysteine 310 and cysteine 421 are joined by a disulfide bond. An N-linked (GlcNAc...) asparagine glycan is attached at asparagine 425. 2 cysteine pairs are disulfide-bonded: cysteine 491–cysteine 520 and cysteine 503–cysteine 509.

Belongs to the sulfatase family. As to quaternary structure, homodimer. Requires Ca(2+) as cofactor. Post-translationally, the conversion to 3-oxoalanine (also known as C-formylglycine, FGly), of a serine or cysteine residue in prokaryotes and of a cysteine residue in eukaryotes, is critical for catalytic activity.

It localises to the lysosome. The catalysed reaction is Hydrolysis of the 6-sulfate groups of the N-acetyl-D-galactosamine 6-sulfate units of chondroitin sulfate and of the D-galactose 6-sulfate units of keratan sulfate.. The chain is N-acetylgalactosamine-6-sulfatase (Galns) from Rattus norvegicus (Rat).